Consider the following 704-residue polypeptide: MSKEKTQQELLLQEQLFKALKTNDTELNAKISRTCKGIAESVIDLSNDQSPTAESLYISYMALADLNTKDLAKVTTIIKNSFPGDKNKKLREIIDAPLLEHLVMIEAIERQVGLDDSRYNADYRKLEEIRNPNDPKKVIDAMLRDKRVAQQAEFEEKGKKAAGVSAGYVAKDNAGNTFILKHFYKTHAACQKIQGNHAQRQAMADRRDGVQELIGSTMYQFLLHDRAPKEGLVTADEQHPDSLYVRSKFFDNAVTLTEFSGLSGETRVRDNDQNLKKLEGFEKAIAACHMLGEVDYHAGNLMVQDGKTITKIDHGRSFLAFHKNFSSMIQSTAEMFTHPGVGYSAAIKAGNFSFSIDKYSESLNQMISQFDEKHMEAIVDQKIDELKKAGFDPKNIMLSTNIQNFDDLRKHYKSSIKENLVNMQEVAKGAEIVTKFSNVSPEFKNGGWLEAFANSPVKDPVLYAIDNNITIEGKDAKEWAYENNYQIKISIGLKKETIKEQQWSKDLDGKWKEKEVEVKTDKVEVQISDPAKSMRIQDKSTGEKLASLIVDFTKQATTKNVTDKAVAKFYDNIMKVLKKENYLTEQDIKGIKKNLKYQDNIENTTNLLNAKSFKLNSKDTIYYKVGIFCEKRGLPSISNYFMKQISPENLNKIHNTEKLIAETIKIGNILQQKKQERLQTKRVETVKEIAFSQLQARKERHQQR.

This is an uncharacterized protein from Rickettsia conorii (strain ATCC VR-613 / Malish 7).